The following is a 157-amino-acid chain: S-ribosylhomocysteine lyase (157 aa).

The Fe cation site is built by His-54, His-58, and Cys-124.

It belongs to the LuxS family. As to quaternary structure, homodimer. It depends on Fe cation as a cofactor.

The catalysed reaction is S-(5-deoxy-D-ribos-5-yl)-L-homocysteine = (S)-4,5-dihydroxypentane-2,3-dione + L-homocysteine. Involved in the synthesis of autoinducer 2 (AI-2) which is secreted by bacteria and is used to communicate both the cell density and the metabolic potential of the environment. The regulation of gene expression in response to changes in cell density is called quorum sensing. Catalyzes the transformation of S-ribosylhomocysteine (RHC) to homocysteine (HC) and 4,5-dihydroxy-2,3-pentadione (DPD). The chain is S-ribosylhomocysteine lyase from Lacticaseibacillus paracasei (strain ATCC 334 / BCRC 17002 / CCUG 31169 / CIP 107868 / KCTC 3260 / NRRL B-441) (Lactobacillus paracasei).